The sequence spans 199 residues: dITP/XTP pyrophosphatase (199 aa).

Substrate is bound at residue 12-17; the sequence is SGNAGK. Residue D73 is the Proton acceptor of the active site. D73 contributes to the Mg(2+) binding site. Substrate contacts are provided by residues S74, 157–160, K180, and 185–186; these read FGYD and HR.

Belongs to the HAM1 NTPase family. Homodimer. Requires Mg(2+) as cofactor.

The catalysed reaction is XTP + H2O = XMP + diphosphate + H(+). The enzyme catalyses dITP + H2O = dIMP + diphosphate + H(+). It carries out the reaction ITP + H2O = IMP + diphosphate + H(+). Pyrophosphatase that catalyzes the hydrolysis of nucleoside triphosphates to their monophosphate derivatives, with a high preference for the non-canonical purine nucleotides XTP (xanthosine triphosphate), dITP (deoxyinosine triphosphate) and ITP. Seems to function as a house-cleaning enzyme that removes non-canonical purine nucleotides from the nucleotide pool, thus preventing their incorporation into DNA/RNA and avoiding chromosomal lesions. The protein is dITP/XTP pyrophosphatase of Neisseria meningitidis serogroup A / serotype 4A (strain DSM 15465 / Z2491).